The sequence spans 249 residues: Probable septum site-determining protein MinC (249 aa).

The interval 116-149 is disordered; the sequence is AAVSPPPPPPPPPARAEPAAPVARPAPGRMQRNA. Over residues 119-130 the composition is skewed to pro residues; the sequence is SPPPPPPPPPAR. Residues 131–142 are compositionally biased toward low complexity; sequence AEPAAPVARPAP.

The protein belongs to the MinC family. In terms of assembly, interacts with MinD and FtsZ.

Cell division inhibitor that blocks the formation of polar Z ring septums. Rapidly oscillates between the poles of the cell to destabilize FtsZ filaments that have formed before they mature into polar Z rings. Prevents FtsZ polymerization. In Xanthomonas campestris pv. campestris (strain B100), this protein is Probable septum site-determining protein MinC.